A 189-amino-acid polypeptide reads, in one-letter code: Glucose-6-phosphate isomerase (189 aa).

Fe cation is bound by residues histidine 88, histidine 90, glutamate 97, and histidine 136.

This sequence belongs to the archaeal-type GPI family. As to quaternary structure, homodimer.

The protein localises to the cytoplasm. It carries out the reaction alpha-D-glucose 6-phosphate = beta-D-fructose 6-phosphate. It functions in the pathway carbohydrate degradation; glycolysis; D-glyceraldehyde 3-phosphate and glycerone phosphate from D-glucose: step 2/4. The protein is Glucose-6-phosphate isomerase of Thermococcus onnurineus (strain NA1).